The primary structure comprises 545 residues: Zinc finger protein 697 (545 aa).

The interval 1 to 143 (MKQEDNQGVC…EQPAPPVLPW (143 aa)) is disordered. K2 is covalently cross-linked (Glycyl lysine isopeptide (Lys-Gly) (interchain with G-Cter in SUMO2)). Acidic residues predominate over residues 23–36 (DFEDSEDREGDPEE). Residues 45 to 55 (DTNKREGHPEP) show a composition bias toward basic and acidic residues. Composition is skewed to acidic residues over residues 79–94 (LSEEEGVSVRGEEDDQ) and 118–135 (EDDDESAGENRLEEEEEQ). 11 consecutive C2H2-type zinc fingers follow at residues 189–211 (TICPDCGESFSPGAAFLQHQRIH), 261–283 (FRCGECGKGFSRNTYLTNHLRLH), 289–311 (NLCADCGKSFSWRADLLKHRRLH), 317–339 (YPCPECGEAFSLSSHLLSHRRAH), 353–375 (FACGECGKGFVRRSHLANHQRIH), 381–403 (HGCGECGKRFSWRSDLVKHQRVH), 409–431 (YMCSECGETFSVSSHLFTHKRTH), 437–459 (YVCRECGKGFGRNSHLVNHLRVH), 465–487 (FRCGQCEKRFSDFSTLTQHQRTH), 493–515 (YTCIECGKSFIQSSHLIRHRRIH), and 521–543 (HKCAGCGKGFRYKTHLAQHQKLH).

This sequence belongs to the krueppel C2H2-type zinc-finger protein family.

It is found in the nucleus. In terms of biological role, RNA-interacting protein with a high number of miRNA targets. Acts as a damage-induced regulator of muscle remodeling by mediating the interferon gamma response in muscle cells. The chain is Zinc finger protein 697 from Homo sapiens (Human).